Reading from the N-terminus, the 860-residue chain is Leucine--tRNA ligase (860 aa).

Residues 42 to 52 (PYPSGRLHMGH) carry the 'HIGH' region motif. The 'KMSKS' region signature appears at 619-623 (KMSKS). Lys-622 serves as a coordination point for ATP.

The protein belongs to the class-I aminoacyl-tRNA synthetase family.

It localises to the cytoplasm. It carries out the reaction tRNA(Leu) + L-leucine + ATP = L-leucyl-tRNA(Leu) + AMP + diphosphate. This Salmonella choleraesuis (strain SC-B67) protein is Leucine--tRNA ligase.